The following is a 186-amino-acid chain: Cytochrome c oxidase polypeptide 5, mitochondrial (186 aa).

The N-terminal 20 residues, 1 to 20 (MYLSKIICKKVPMKLLCTRN), are a transit peptide targeting the mitochondrion. Topologically, residues 21–107 (AATVSAAATN…GPRAFSHISQ (87 aa)) are mitochondrial matrix. The helical transmembrane segment at 108-128 (KTVFWGTVAGLTIGVVLFGLI) threads the bilayer. Over 129-186 (RTQAAPSPRTMTREWQEKSNEYMKENKINPISGEASEGFKGRGQISGGIFSPSEKDKK) the chain is Mitochondrial intermembrane. The disordered stretch occupies residues 149-186 (EYMKENKINPISGEASEGFKGRGQISGGIFSPSEKDKK).

It belongs to the cytochrome c oxidase IV family. Component of the cytochrome c oxidase (complex IV, CIV), a multisubunit enzyme composed of a catalytic core of 3 subunits and seevral supernumerary subunits. The complex exists as a monomer or a dimer and forms supercomplexes (SCs) in the inner mitochondrial membrane with ubiquinol-cytochrome c oxidoreductase (cytochrome b-c1 complex, complex III, CIII).

It localises to the mitochondrion inner membrane. It participates in energy metabolism; oxidative phosphorylation. Functionally, component of the cytochrome c oxidase, the last enzyme in the mitochondrial electron transport chain which drives oxidative phosphorylation. The respiratory chain contains 3 multisubunit complexes succinate dehydrogenase (complex II, CII), ubiquinol-cytochrome c oxidoreductase (cytochrome b-c1 complex, complex III, CIII) and cytochrome c oxidase (complex IV, CIV), that cooperate to transfer electrons derived from NADH and succinate to molecular oxygen, creating an electrochemical gradient over the inner membrane that drives transmembrane transport and the ATP synthase. Cytochrome c oxidase is the component of the respiratory chain that catalyzes the reduction of oxygen to water. Electrons originating from reduced cytochrome c in the intermembrane space (IMS) are transferred via the dinuclear copper A center (CU(A)) of subunit 2 and heme A of subunit 1 to the active site in subunit 1, a binuclear center (BNC) formed by heme A3 and copper B (CU(B)). The BNC reduces molecular oxygen to 2 water molecules using 4 electrons from cytochrome c in the IMS and 4 protons from the mitochondrial matrix. This Schizosaccharomyces pombe (strain 972 / ATCC 24843) (Fission yeast) protein is Cytochrome c oxidase polypeptide 5, mitochondrial (cox5).